A 728-amino-acid polypeptide reads, in one-letter code: Catalase-peroxidase (728 aa).

The tract at residues 1-26 is disordered; sequence MDNPTDTAGKCPVAHGNKPRGPSNRD. Positions 96-218 form a cross-link, tryptophyl-tyrosyl-methioninium (Trp-Tyr) (with M-244); sequence WHSAGTYRIT…LGAVQMGLIY (123 aa). The active-site Proton acceptor is His97. The tryptophyl-tyrosyl-methioninium (Tyr-Met) (with W-96) cross-link spans 218-244; that stretch reads YVNPEGPGGNPDPLASARDIRETFARM. His259 lines the heme b pocket.

It belongs to the peroxidase family. Peroxidase/catalase subfamily. Homodimer or homotetramer. Heme b serves as cofactor. In terms of processing, formation of the three residue Trp-Tyr-Met cross-link is important for the catalase, but not the peroxidase activity of the enzyme.

The catalysed reaction is H2O2 + AH2 = A + 2 H2O. It catalyses the reaction 2 H2O2 = O2 + 2 H2O. In terms of biological role, bifunctional enzyme with both catalase and broad-spectrum peroxidase activity. The polypeptide is Catalase-peroxidase (Rhizobium etli (strain CIAT 652)).